The sequence spans 262 residues: ATP synthase subunit a (262 aa).

5 helical membrane passes run 25-45 (NVHI…LAVF), 86-106 (VAPL…IDLI), 130-150 (DISA…FYTV), 204-226 (LIFI…GIPL), and 240-260 (LQAF…YNKA).

It belongs to the ATPase A chain family. As to quaternary structure, F-type ATPases have 2 components, CF(1) - the catalytic core - and CF(0) - the membrane proton channel. CF(1) has five subunits: alpha(3), beta(3), gamma(1), delta(1), epsilon(1). CF(0) has three main subunits: a(1), b(2) and c(9-12). The alpha and beta chains form an alternating ring which encloses part of the gamma chain. CF(1) is attached to CF(0) by a central stalk formed by the gamma and epsilon chains, while a peripheral stalk is formed by the delta and b chains.

Its subcellular location is the cell inner membrane. Key component of the proton channel; it plays a direct role in the translocation of protons across the membrane. This is ATP synthase subunit a from Mannheimia succiniciproducens (strain KCTC 0769BP / MBEL55E).